The primary structure comprises 471 residues: MTTEAAVLDYKVADISLAEWGRKEIEIAEKEMPGLMATRKKYEGKKPLAGARIAGSLHMTIQTAVLIETLVELGADVRWASCNIFSTQDHAAAAIAAAGVPVFAWKGETLDEYWWCTRQILEFEGGLGPNLIVDDGGDATLMIHLGYKIENDPSMLDKTPGNAEERALFAQLKEVFAEDNQRWHKVAAGMKGVSEETTTGVHRLYQMMEKGELLFPAINVNDSVTKSKFDNLYGCRESLADGIKRATDVMIAGKVAVVLGYGDVGKGCAHSMRSYGARVIVTEIDPICALQAAMEGFQVTTIEEALEEGNIYVTTTGNKDVITLEHMKKMKDEAIVCNIGHFDNEIQVDALNNFKGATRINIKPQVDKYVFEDGRCIYLLAEGRLVNLGCATGHPSFVMSNSFTNQTLAQIELWKNNYDVDVYRLPKHLDEEVARLHLGQIGVKLTTLSKEQADYIGVPVEGPYKPEHYRY.

Substrate contacts are provided by threonine 60, aspartate 135, and glutamate 196. 197–199 contributes to the NAD(+) binding site; sequence TTT. Positions 226 and 230 each coordinate substrate. NAD(+) is bound by residues asparagine 231, 260–265, glutamate 283, asparagine 318, 339–341, and asparagine 387; these read GYGDVG and IGH.

Belongs to the adenosylhomocysteinase family. The cofactor is NAD(+).

It is found in the cytoplasm. The enzyme catalyses S-adenosyl-L-homocysteine + H2O = L-homocysteine + adenosine. It participates in amino-acid biosynthesis; L-homocysteine biosynthesis; L-homocysteine from S-adenosyl-L-homocysteine: step 1/1. In terms of biological role, may play a key role in the regulation of the intracellular concentration of adenosylhomocysteine. The sequence is that of Adenosylhomocysteinase from Chlorobaculum parvum (strain DSM 263 / NCIMB 8327) (Chlorobium vibrioforme subsp. thiosulfatophilum).